We begin with the raw amino-acid sequence, 427 residues long: Enolase (427 aa).

Gln-162 serves as a coordination point for (2R)-2-phosphoglycerate. The active-site Proton donor is Glu-206. Residues Asp-243, Glu-286, and Asp-313 each coordinate Mg(2+). Positions 338, 367, 368, and 389 each coordinate (2R)-2-phosphoglycerate. The active-site Proton acceptor is the Lys-338.

It belongs to the enolase family. The cofactor is Mg(2+).

Its subcellular location is the cytoplasm. The protein localises to the secreted. The protein resides in the cell surface. It carries out the reaction (2R)-2-phosphoglycerate = phosphoenolpyruvate + H2O. It participates in carbohydrate degradation; glycolysis; pyruvate from D-glyceraldehyde 3-phosphate: step 4/5. Its function is as follows. Catalyzes the reversible conversion of 2-phosphoglycerate (2-PG) into phosphoenolpyruvate (PEP). It is essential for the degradation of carbohydrates via glycolysis. The sequence is that of Enolase from Methanopyrus kandleri (strain AV19 / DSM 6324 / JCM 9639 / NBRC 100938).